The primary structure comprises 233 residues: Cell surface glycoprotein gp42 (233 aa).

The first 16 residues, 1 to 16 (MLLWMVLLLCVSMTEA), serve as a signal peptide directing secretion. Ig-like domains are found at residues 23–98 (PVLS…GTIQ) and 115–195 (PVLT…RDIS). N-linked (GlcNAc...) asparagine glycosylation is found at asparagine 29, asparagine 66, and asparagine 181. Intrachain disulfides connect cysteine 40–cysteine 88 and cysteine 136–cysteine 184. Residue glycine 206 is the site of GPI-anchor amidated glycine attachment. Positions 207-233 (TASMKSTTVVIWLPVSCLVGWPWLLRF) are cleaved as a propeptide — removed in mature form.

NK cells.

It is found in the cell membrane. The chain is Cell surface glycoprotein gp42 from Rattus norvegicus (Rat).